The chain runs to 356 residues: Protein RecA (356 aa).

Residue 67–74 (GPESSGKT) coordinates ATP.

It belongs to the RecA family.

The protein resides in the cytoplasm. Can catalyze the hydrolysis of ATP in the presence of single-stranded DNA, the ATP-dependent uptake of single-stranded DNA by duplex DNA, and the ATP-dependent hybridization of homologous single-stranded DNAs. It interacts with LexA causing its activation and leading to its autocatalytic cleavage. The chain is Protein RecA from Yersinia pestis bv. Antiqua (strain Angola).